A 146-amino-acid polypeptide reads, in one-letter code: Hemoglobin subunit beta (146 aa).

The residue at position 1 (Val-1) is an N-acetylvaline. The Globin domain maps to 2–146 (HLTGEEKSAV…VANALAHKYH (145 aa)). Residue Thr-12 is modified to Phosphothreonine. At Ser-44 the chain carries Phosphoserine. Lys-59 carries the N6-acetyllysine modification. A heme b-binding site is contributed by His-63. Lys-82 is subject to N6-acetyllysine. His-92 contacts heme b. Cys-93 bears the S-nitrosocysteine mark. N6-acetyllysine is present on Lys-144.

This sequence belongs to the globin family. In terms of assembly, heterotetramer of two alpha chains and two beta chains. As to expression, red blood cells.

In terms of biological role, involved in oxygen transport from the lung to the various peripheral tissues. This is Hemoglobin subunit beta (HBB) from Saguinus oedipus (Cotton-top tamarin).